A 452-amino-acid polypeptide reads, in one-letter code: Lamina-associated polypeptide 2, isoform beta (452 aa).

Positions 1–409 are nucleoplasmic; it reads MPEFLEDPSV…KSEKTKKGRS (409 aa). Positions 5-48 constitute an LEM-like domain; that stretch reads LEDPSVLTKDKLKSELVANNVTLPAGEQRKDVYVQLYLQHLTAR. 2 disordered regions span residues 48 to 113 and 149 to 264; these read RNRP…DVTE and REQG…VEPS. Residues 49–107 form a linker region; the sequence is NRPPLAAGANSKGPPDFSSDEEREPTPVLGSGASVGRGRGAVGRKATKKTDKPRPEDKD. Residues serine 66 and serine 67 each carry the phosphoserine modification. Threonine 74 is modified (phosphothreonine). At serine 82 the chain carries Phosphoserine. Residues arginine 85 and arginine 87 each carry the omega-N-methylarginine modification. Basic and acidic residues predominate over residues 96–105; it reads KKTDKPRPED. The LEM domain maps to 108–152; it reads DLDVTELSNEELLEQLVRYGVNPGPIVGTTRKLYEKKLLKLREQG. Residues 137–242 are NAKAP95-binding N; the sequence is TRKLYEKKLL…TSGSSKGGPL (106 aa). Residues 154–177 are compositionally biased toward polar residues; it reads ESRSSTPLPTVSSSAENTRQNGSN. A phosphoserine mark is found at serine 155 and serine 158. Threonine 159 carries the phosphothreonine modification. Phosphoserine is present on residues serine 165, serine 167, serine 176, serine 179, and serine 183. The segment covering 178–202 has biased composition (basic and acidic residues); it reads DSDRYSDNDEDSKIELKLEKREPLK. At lysine 206 the chain carries N6-acetyllysine. Residues 298–370 are binds lamins B; the sequence is TGNFKHASSI…SCRRPIKGAA (73 aa). Residues 299–373 are NAKAP95-binding C; sequence GNFKHASSIL…RPIKGAAGRP (75 aa). Residues serine 305, serine 306, and serine 361 each carry the phosphoserine modification. Position 388 is an N6-acetyllysine (lysine 388). Residues 410-430 traverse the membrane as a helical; Signal-anchor for type II membrane protein segment; sequence VPMWIKMLLFALVAGFLFLVY. Residues 431 to 452 are Lumenal-facing; that stretch reads QAMETNQGNPFTNFLQDTKISN.

This sequence belongs to the LEM family. In terms of assembly, interacts with LMNB1, LMNB2, BANF1, AKAP8L, GMCL and chromosomes. In terms of processing, mitosis-specific phosphorylation specifically abolishes its binding to lamin B and chromosomes.

It is found in the nucleus inner membrane. The protein resides in the chromosome. Its function is as follows. Binds directly to lamin B1 and chromosomes in a mitotic phosphorylation-regulated manner. May play an important role in nuclear envelope reassembly at the end of mitosis and/or anchoring of the nuclear lamina and interphase chromosomes to the nuclear envelope. This Rattus norvegicus (Rat) protein is Lamina-associated polypeptide 2, isoform beta (Tmpo).